The primary structure comprises 161 residues: MGRQFAGICGARGSLYGCVVCNTYLTCSKELTSKAFTGSTGPATLFKRAWNVVYGRCEHRKMTTGWHTVRDVFCVTCNQKLGWMYEMAVSESQTYKETQVIIENANFEKIAGAIKDPLGEDRQEAPPAPNLEMSRYPLEAEKKSRPQYRTVSVSSSSSAEC.

The Yippee domain occupies 14 to 111 (SLYGCVVCNT…IENANFEKIA (98 aa)). Cysteine 18, cysteine 21, cysteine 74, and cysteine 77 together coordinate Zn(2+). Residues 117–161 (PLGEDRQEAPPAPNLEMSRYPLEAEKKSRPQYRTVSVSSSSSAEC) are disordered. Positions 151–161 (VSVSSSSSAEC) are enriched in low complexity.

The protein belongs to the yippee family.

This chain is Protein yippee-like B0546.4, found in Caenorhabditis elegans.